Here is a 269-residue protein sequence, read N- to C-terminus: Formamidopyrimidine-DNA glycosylase (269 aa).

Residue P2 is the Schiff-base intermediate with DNA of the active site. E3 (proton donor) is an active-site residue. The active-site Proton donor; for beta-elimination activity is the K57. DNA contacts are provided by H90, R109, and K150. Residues 235–269 (QVYGRKGEPCRVCGTPIVATKHAQRATFYCRQCQK) form an FPG-type zinc finger. Residue R259 is the Proton donor; for delta-elimination activity of the active site.

Belongs to the FPG family. In terms of assembly, monomer. It depends on Zn(2+) as a cofactor.

The enzyme catalyses Hydrolysis of DNA containing ring-opened 7-methylguanine residues, releasing 2,6-diamino-4-hydroxy-5-(N-methyl)formamidopyrimidine.. The catalysed reaction is 2'-deoxyribonucleotide-(2'-deoxyribose 5'-phosphate)-2'-deoxyribonucleotide-DNA = a 3'-end 2'-deoxyribonucleotide-(2,3-dehydro-2,3-deoxyribose 5'-phosphate)-DNA + a 5'-end 5'-phospho-2'-deoxyribonucleoside-DNA + H(+). Its function is as follows. Involved in base excision repair of DNA damaged by oxidation or by mutagenic agents. Acts as a DNA glycosylase that recognizes and removes damaged bases. Has a preference for oxidized purines, such as 7,8-dihydro-8-oxoguanine (8-oxoG). Has AP (apurinic/apyrimidinic) lyase activity and introduces nicks in the DNA strand. Cleaves the DNA backbone by beta-delta elimination to generate a single-strand break at the site of the removed base with both 3'- and 5'-phosphates. The sequence is that of Formamidopyrimidine-DNA glycosylase from Escherichia coli (strain K12 / MC4100 / BW2952).